We begin with the raw amino-acid sequence, 84 residues long: Small ribosomal subunit protein uS17 (84 aa).

Belongs to the universal ribosomal protein uS17 family. In terms of assembly, part of the 30S ribosomal subunit.

Functionally, one of the primary rRNA binding proteins, it binds specifically to the 5'-end of 16S ribosomal RNA. The polypeptide is Small ribosomal subunit protein uS17 (Clostridium beijerinckii (strain ATCC 51743 / NCIMB 8052) (Clostridium acetobutylicum)).